A 188-amino-acid polypeptide reads, in one-letter code: Elongation factor P (188 aa).

This sequence belongs to the elongation factor P family.

Its subcellular location is the cytoplasm. The protein operates within protein biosynthesis; polypeptide chain elongation. Involved in peptide bond synthesis. Stimulates efficient translation and peptide-bond synthesis on native or reconstituted 70S ribosomes in vitro. Probably functions indirectly by altering the affinity of the ribosome for aminoacyl-tRNA, thus increasing their reactivity as acceptors for peptidyl transferase. The protein is Elongation factor P of Cellvibrio japonicus (strain Ueda107) (Pseudomonas fluorescens subsp. cellulosa).